Reading from the N-terminus, the 317-residue chain is MATTTQTTTNSLPSGAGGPQQLVTQMLNHTAPHYTFSFTPFLQRTYQHSLPADRPICKAYASGNCPLKSHCPERHVTASSQNTHGGGNTFSGGFGSLVCKHWLRGLCKKGESCEFLHEYNLRKMPECNFFVRNGYCSNGDECLYLHIDPLSRLPPCPHYERGFCPLGPRCDKKHFRRKLCLYYLAGFCPDGKGCKEGAHPRWTADKDMEKPRAKGEGDQMLLQQQQQQQQQQHMGDANGMGGGMAQATGANEYMDRERERDRDNREREMMMQGRDRDGGGHDRHKDRFGGGGGGGGGGRGRGGWRGRGRGGFRGKGH.

The disordered stretch occupies residues 1 to 20; the sequence is MATTTQTTTNSLPSGAGGPQ. 5 consecutive C3H1-type zinc fingers follow at residues 51–78, 93–120, 121–149, 150–177, and 179–202; these read PADR…HVTA, GFGS…HEYN, LRKM…HIDP, LSRL…HFRR, and LCLY…HPRW. A compositionally biased stretch (basic and acidic residues) spans 202–217; it reads WTADKDMEKPRAKGEG. Residues 202 to 317 are disordered; the sequence is WTADKDMEKP…GRGGFRGKGH (116 aa). The segment covering 223 to 237 has biased composition (low complexity); it reads QQQQQQQQQQHMGDA. The span at 253 to 288 shows a compositional bias: basic and acidic residues; it reads YMDRERERDRDNREREMMMQGRDRDGGGHDRHKDRF. Residues 289–301 show a composition bias toward gly residues; the sequence is GGGGGGGGGGRGR. The span at 302–317 shows a compositional bias: basic residues; that stretch reads GGWRGRGRGGFRGKGH.

It belongs to the CPSF4/YTH1 family.

It is found in the nucleus. Functionally, component of the cleavage factor I (CF I) involved in pre-mRNA 3'-end processing. This chain is mRNA 3'-end-processing protein yth-1 (yth-1), found in Neurospora crassa (strain ATCC 24698 / 74-OR23-1A / CBS 708.71 / DSM 1257 / FGSC 987).